The primary structure comprises 977 residues: Disks large-associated protein 3 (977 aa).

The span at 1 to 10 shows a compositional bias: basic and acidic residues; the sequence is MRGYHGDRGS. Disordered regions lie at residues 1–24, 52–96, 137–167, 181–289, 398–417, and 529–582; these read MRGY…QHMD, AGLG…MYPG, FHTL…ESPS, AKSH…CLDA, AMGD…SPKA, and PGSS…SADG. Positions 53–73 are enriched in low complexity; that stretch reads GLGHLSPEGPLSLSEGPSSVG. Ser58 carries the post-translational modification Phosphoserine. Gly residues predominate over residues 74-87; sequence PEGGPGGVGAGGGS. Residues 189–201 show a composition bias toward basic and acidic residues; the sequence is PGKRDYNGPKADG. The span at 221 to 245 shows a compositional bias: basic residues; it reads SHHHHHHHHHHHHQSRHGKRSKSKD. The span at 258 to 271 shows a compositional bias: low complexity; the sequence is GWWSSDDNLDSDSG. Residues Ser404, Ser407, Ser410, and Ser414 each carry the phosphoserine modification. Pro residues predominate over residues 538–547; that stretch reads APPPIPPGSQ. Residues Ser641 and Ser643 each carry the phosphoserine modification. Disordered stretches follow at residues 739 to 788 and 906 to 939; these read EGYP…RTSP and EEKK…RQRQ. Composition is skewed to basic and acidic residues over residues 767-777 and 925-939; these read GRRDSWMERGS and PVKE…RQRQ. Phosphoserine is present on residues Ser930, Ser933, and Ser965.

The protein belongs to the SAPAP family. As to quaternary structure, interacts with DLG4/PSD-95. Highly expressed in central and peripherical nervous system (at protein level).

The protein resides in the cell membrane. Its subcellular location is the postsynaptic density. It is found in the synapse. Functionally, may play a role in the molecular organization of synapses and neuronal cell signaling. Could be an adapter protein linking ion channel to the subsynaptic cytoskeleton. May induce enrichment of PSD-95/SAP90 at the plasma membrane. The chain is Disks large-associated protein 3 (Dlgap3) from Mus musculus (Mouse).